We begin with the raw amino-acid sequence, 100 residues long: MVQVQVEFLGGLDVIFSKQRKHQVSVEGANGSVTVGDLIDYIVSNMIQKQKDVSVFLEDNTIRPGILTLINDTDWELEGEKEYVLEDGDIVSFTSTLHGG.

At G100 the chain carries 1-thioglycine. Residue G100 forms a Glycyl lysine isopeptide (Gly-Lys) (interchain with K-? in acceptor proteins) linkage.

It belongs to the URM1 family. In terms of processing, C-terminal thiocarboxylation occurs in 2 steps, it is first acyl-adenylated (-COAMP) via the hesA/moeB/thiF part of UBA4, then thiocarboxylated (-COSH) via the rhodanese domain of UBA4.

The protein localises to the cytoplasm. The protein operates within tRNA modification; 5-methoxycarbonylmethyl-2-thiouridine-tRNA biosynthesis. Its function is as follows. Acts as a sulfur carrier required for 2-thiolation of mcm(5)S(2)U at tRNA wobble positions of cytosolic tRNA(Lys), tRNA(Glu) and tRNA(Gln). Serves as sulfur donor in tRNA 2-thiolation reaction by being thiocarboxylated (-COSH) at its C-terminus by the MOCS3 homolog UBA4. The sulfur is then transferred to tRNA to form 2-thiolation of mcm(5)S(2)U. Prior mcm(5) tRNA modification by the elongator complex is required for 2-thiolation. Also acts as a ubiquitin-like protein (UBL) that is covalently conjugated via an isopeptide bond to lysine residues of target proteins such as AHP1. The thiocarboxylated form serves as substrate for conjugation and oxidative stress specifically induces the formation of UBL-protein conjugates. This Eremothecium gossypii (strain ATCC 10895 / CBS 109.51 / FGSC 9923 / NRRL Y-1056) (Yeast) protein is Ubiquitin-related modifier 1.